Reading from the N-terminus, the 428-residue chain is 3-phosphoshikimate 1-carboxyvinyltransferase (428 aa).

Positions 22, 23, and 27 each coordinate 3-phosphoshikimate. A phosphoenolpyruvate-binding site is contributed by Lys22. Positions 96 and 124 each coordinate phosphoenolpyruvate. 3-phosphoshikimate is bound by residues Ser170, Ser171, Gln172, Ser198, Asp314, Asn337, and Lys341. Gln172 contacts phosphoenolpyruvate. Asp314 serves as the catalytic Proton acceptor. 3 residues coordinate phosphoenolpyruvate: Arg345, Arg387, and Lys412.

The protein belongs to the EPSP synthase family. As to quaternary structure, monomer.

The protein resides in the cytoplasm. The catalysed reaction is 3-phosphoshikimate + phosphoenolpyruvate = 5-O-(1-carboxyvinyl)-3-phosphoshikimate + phosphate. The protein operates within metabolic intermediate biosynthesis; chorismate biosynthesis; chorismate from D-erythrose 4-phosphate and phosphoenolpyruvate: step 6/7. In terms of biological role, catalyzes the transfer of the enolpyruvyl moiety of phosphoenolpyruvate (PEP) to the 5-hydroxyl of shikimate-3-phosphate (S3P) to produce enolpyruvyl shikimate-3-phosphate and inorganic phosphate. The chain is 3-phosphoshikimate 1-carboxyvinyltransferase from Vibrio vulnificus (strain YJ016).